A 214-amino-acid chain; its full sequence is Octanoyltransferase (214 aa).

The region spanning 28–203 (GSGAETLLLL…RFEGFLDEFM (176 aa)) is the BPL/LPL catalytic domain. Residues 66–73 (RGGDVTYH), 133–135 (SIG), and 146–148 (GFA) each bind substrate. The active-site Acyl-thioester intermediate is the C164.

Belongs to the LipB family.

The protein localises to the cytoplasm. It catalyses the reaction octanoyl-[ACP] + L-lysyl-[protein] = N(6)-octanoyl-L-lysyl-[protein] + holo-[ACP] + H(+). The protein operates within protein modification; protein lipoylation via endogenous pathway; protein N(6)-(lipoyl)lysine from octanoyl-[acyl-carrier-protein]: step 1/2. Functionally, catalyzes the transfer of endogenously produced octanoic acid from octanoyl-acyl-carrier-protein onto the lipoyl domains of lipoate-dependent enzymes. Lipoyl-ACP can also act as a substrate although octanoyl-ACP is likely to be the physiological substrate. The sequence is that of Octanoyltransferase from Geotalea uraniireducens (strain Rf4) (Geobacter uraniireducens).